An 888-amino-acid polypeptide reads, in one-letter code: Phosphoenolpyruvate carboxylase (888 aa).

Residues histidine 144 and lysine 553 contribute to the active site.

This sequence belongs to the PEPCase type 1 family. The cofactor is Mg(2+).

It catalyses the reaction oxaloacetate + phosphate = phosphoenolpyruvate + hydrogencarbonate. Forms oxaloacetate, a four-carbon dicarboxylic acid source for the tricarboxylic acid cycle. This Alcanivorax borkumensis (strain ATCC 700651 / DSM 11573 / NCIMB 13689 / SK2) protein is Phosphoenolpyruvate carboxylase.